The sequence spans 154 residues: Ribonuclease H (154 aa).

In terms of domain architecture, RNase H type-1 spans 1-142; that stretch reads MLKQITLYTD…CDELARNAAL (142 aa). Mg(2+)-binding residues include aspartate 10, glutamate 48, aspartate 70, and aspartate 134.

The protein belongs to the RNase H family. As to quaternary structure, monomer. Mg(2+) is required as a cofactor.

It localises to the cytoplasm. It carries out the reaction Endonucleolytic cleavage to 5'-phosphomonoester.. Its function is as follows. Endonuclease that specifically degrades the RNA of RNA-DNA hybrids. The protein is Ribonuclease H of Tolumonas auensis (strain DSM 9187 / NBRC 110442 / TA 4).